The chain runs to 644 residues: MAKIIGIDLGTTNSCVAVMEGDKPKVIENSEGHRTTPSIVAFTDDNEILVGQSAKRQSVTNPEKTLFAIKRLIGRRFDDPIVQKDIKMVPYKIMKADNGDAWVRVKDQDKAPPQISAEVLRKMKKTAEDYLGEEVKEAVITVPAYFNDSQRQATKDAGRIAGLEVKRIINEPTAAALAYGMDKKRGDSVIAVYDLGGGTFDISIIEIAEVDGEHQFEVLATNGDTFLGGEDFDLALIEYLASEFKKDTGIDLHNDPLALQRLKEAAEKAKIELSSAQQTDVNLPYITADASGPKHLNIKLTRAKLESLVEKLVERTIEPCKTALKDAGLTVSQINEVILVGGQTRMPLVQKTVEEFFGKEPRKDVNPDEAVAVGAAIQAAVLSGEVKDILLLDVTPLSLGIETMGGVMTKLIEKNTTIPTKATQVFSTADDNQTAVTVHVLQGEREQASANKSLGRFDLRDIPPAPRGVPQIEVTFDIDANGILNVSAKDKATGKAQSIVIKASSGLSEEEVAAMVKDAQSHAEEDKKFKEMAELRNQADSLIHSCEKSMKDLADELSEDEKKGIETAISELKEAVQGTDKARIEDKLKVLTDASAKMAERIYAKKSSEGQTAQGQTQSQESTKPAEEGVVDAEFEEVKEEDKK.

A Phosphothreonine; by autocatalysis modification is found at T199. A disordered region spans residues 602–644; the sequence is IYAKKSSEGQTAQGQTQSQESTKPAEEGVVDAEFEEVKEEDKK. Residues 609–623 show a composition bias toward polar residues; it reads EGQTAQGQTQSQEST. Residues 629-644 show a composition bias toward acidic residues; that stretch reads GVVDAEFEEVKEEDKK.

Belongs to the heat shock protein 70 family.

In terms of biological role, acts as a chaperone. This chain is Chaperone protein DnaK, found in Legionella pneumophila (strain Lens).